A 487-amino-acid chain; its full sequence is Meiotic recombination protein SPO11-4 (487 aa).

The disordered stretch occupies residues 1–56; the sequence is MDDSTDDDSYHPRKHYAYDRQVSSSRWRTSREYIRGPGPETHTTESAQDGQDPPAG. One can recognise a Topo IIA-type catalytic domain in the interval 119–252; that stretch reads KSRVEARKTL…LGIIAAEKGI (134 aa). The active-site O-(5'-phospho-DNA)-tyrosine intermediate is the Y213. Mg(2+) is bound by residues E301 and D353.

It belongs to the TOP6A family. As to quaternary structure, homodimer. Interacts with TOP6B. It depends on Mg(2+) as a cofactor.

The protein resides in the nucleus. The catalysed reaction is ATP-dependent breakage, passage and rejoining of double-stranded DNA.. Its function is as follows. Required for meiotic recombination. Mediates DNA cleavage that forms the double-strand breaks (DSB) that initiate meiotic recombination. Possesses double-stranded DNA cleavage activity in vitro. The sequence is that of Meiotic recombination protein SPO11-4 (SPO11-4) from Oryza sativa subsp. japonica (Rice).